A 129-amino-acid polypeptide reads, in one-letter code: Small ribosomal subunit protein uS11 (129 aa).

Belongs to the universal ribosomal protein uS11 family. As to quaternary structure, part of the 30S ribosomal subunit. Interacts with proteins S7 and S18. Binds to IF-3.

Functionally, located on the platform of the 30S subunit, it bridges several disparate RNA helices of the 16S rRNA. Forms part of the Shine-Dalgarno cleft in the 70S ribosome. This chain is Small ribosomal subunit protein uS11, found in Staphylococcus haemolyticus (strain JCSC1435).